The chain runs to 123 residues: Histone H2B (123 aa).

A disordered region spans residues 1 to 31 (MPPKTSGKAAKKAGKAQKNITKNDKKKKRKR). Residue P2 is modified to N-methylproline; partial. K44 bears the N6-succinyllysine mark. A glycan (O-linked (GlcNAc) serine) is linked at S110. Residues K114 and K118 each carry the N6-succinyllysine modification. K118 is covalently cross-linked (Glycyl lysine isopeptide (Lys-Gly) (interchain with G-Cter in ubiquitin)).

Belongs to the histone H2B family. The nucleosome is a histone octamer containing two molecules each of H2A, H2B, H3 and H4 assembled in one H3-H4 heterotetramer and two H2A-H2B heterodimers. The octamer wraps approximately 147 bp of DNA. In terms of processing, phosphorylated by the catalytic component of the Dbf4-dependent kinase (DDK) complex Cdc7. Monoubiquitination of Lys-118 by Bre1 gives a specific tag for epigenetic transcriptional activation and is also prerequisite for histone H3 'Lys-4' and 'Lys-79' methylation. Deubiquitination of Lys-118 by the SAGA complex is involved in activating transcription of a large subset of genes. Post-translationally, methylation at Pro-2 increases upon heat shock. In terms of processing, glcNAcylation at Ser-110 promotes monoubiquitination of Lys-118. It fluctuates in response to extracellular glucose, and associates with transcribed genes.

It is found in the nucleus. The protein resides in the chromosome. Its function is as follows. Core component of nucleosome. Nucleosomes wrap and compact DNA into chromatin, limiting DNA accessibility to the cellular machineries which require DNA as a template. Histones thereby play a central role in transcription regulation, DNA repair, DNA replication and chromosomal stability. DNA accessibility is regulated via a complex set of post-translational modifications of histones, also called histone code, and nucleosome remodeling. This chain is Histone H2B (His2B), found in Drosophila sechellia (Fruit fly).